We begin with the raw amino-acid sequence, 145 residues long: Flagellar assembly factor FliW (145 aa).

It belongs to the FliW family. In terms of assembly, interacts with translational regulator CsrA and flagellin(s).

The protein localises to the cytoplasm. Functionally, acts as an anti-CsrA protein, binds CsrA and prevents it from repressing translation of its target genes, one of which is flagellin. Binds to flagellin and participates in the assembly of the flagellum. The chain is Flagellar assembly factor FliW from Clostridium kluyveri (strain NBRC 12016).